A 334-amino-acid chain; its full sequence is Probable fructose-bisphosphate aldolase class 1 (334 aa).

This sequence belongs to the class I fructose-bisphosphate aldolase family.

It catalyses the reaction beta-D-fructose 1,6-bisphosphate = D-glyceraldehyde 3-phosphate + dihydroxyacetone phosphate. Its pathway is carbohydrate degradation; glycolysis; D-glyceraldehyde 3-phosphate and glycerone phosphate from D-glucose: step 4/4. The polypeptide is Probable fructose-bisphosphate aldolase class 1 (Xanthomonas campestris pv. campestris (strain ATCC 33913 / DSM 3586 / NCPPB 528 / LMG 568 / P 25)).